The following is a 189-amino-acid chain: Proline-rich protein 29 (189 aa).

The segment at 152-189 is disordered; the sequence is SREREVRAVPPPPPPSATGTVGADVPPASDYYDAESLL.

The sequence is that of Proline-rich protein 29 (PRR29) from Homo sapiens (Human).